Consider the following 433-residue polypeptide: GTPase Obg (433 aa).

The Obg domain occupies 1–159 (MKFVDSADLI…FEIRAELKVL (159 aa)). Residues 160-332 (ADVGFVGLPN…LLFMIYEELK (173 aa)) form the OBG-type G domain. GTP is bound by residues 166–173 (GLPNAGKS), 191–195 (FTTIT), 213–216 (DLPG), 284–287 (NKMD), and 313–315 (SGL). Positions 173 and 193 each coordinate Mg(2+). The region spanning 355-433 (KFEEQKEDIQ…VFDYELEWTD (79 aa)) is the OCT domain.

It belongs to the TRAFAC class OBG-HflX-like GTPase superfamily. OBG GTPase family. As to quaternary structure, monomer. Mg(2+) is required as a cofactor.

It is found in the cytoplasm. Functionally, an essential GTPase which binds GTP, GDP and possibly (p)ppGpp with moderate affinity, with high nucleotide exchange rates and a fairly low GTP hydrolysis rate. Plays a role in control of the cell cycle, stress response, ribosome biogenesis and in those bacteria that undergo differentiation, in morphogenesis control. The protein is GTPase Obg of Mycoplasma mycoides subsp. mycoides SC (strain CCUG 32753 / NCTC 10114 / PG1).